The primary structure comprises 338 residues: MDRIVEIEKVSFESEFEVSLRPSSFDDYIGQEKIKQNLDVFIKAAKKRGECLDHVLFYGPPGLGKTTLAHIIANEMAVSIKMTAAPMIEKSGDLAAILTNLQEGDVLFIDEIHRLSPAIEEVLYPAMEDFRLDIIIGSGPAAQTIKIDLPKFTLIGATTRAGMISAPLRDRFGMDFRLQFYSTAELSRIIQIASVKLGKECDKAAALEIAKRARATPRIALRLLKRIRDFAEVNDEAMISHERAKEGLNALGVNSLGFDEMDIKYLEILLDAKRRPLGLSTIAAALSEDEGTVEDVIEPYLLANGFIERTAKGRIASEKCFETFKIKLNRTKGLFDGE.

Positions 1 to 181 (MDRIVEIEKV…FGMDFRLQFY (181 aa)) are large ATPase domain (RuvB-L). ATP contacts are provided by residues Leu-20, Arg-21, Gly-62, Lys-65, Thr-66, Thr-67, 128-130 (EDF), Arg-171, Tyr-181, and Arg-218. Thr-66 contacts Mg(2+). Residues 182–252 (STAELSRIIQ…RAKEGLNALG (71 aa)) form a small ATPAse domain (RuvB-S) region. A head domain (RuvB-H) region spans residues 255–338 (SLGFDEMDIK…NRTKGLFDGE (84 aa)). DNA contacts are provided by Arg-309 and Arg-314.

It belongs to the RuvB family. Homohexamer. Forms an RuvA(8)-RuvB(12)-Holliday junction (HJ) complex. HJ DNA is sandwiched between 2 RuvA tetramers; dsDNA enters through RuvA and exits via RuvB. An RuvB hexamer assembles on each DNA strand where it exits the tetramer. Each RuvB hexamer is contacted by two RuvA subunits (via domain III) on 2 adjacent RuvB subunits; this complex drives branch migration. In the full resolvosome a probable DNA-RuvA(4)-RuvB(12)-RuvC(2) complex forms which resolves the HJ.

The protein resides in the cytoplasm. It catalyses the reaction ATP + H2O = ADP + phosphate + H(+). In terms of biological role, the RuvA-RuvB-RuvC complex processes Holliday junction (HJ) DNA during genetic recombination and DNA repair, while the RuvA-RuvB complex plays an important role in the rescue of blocked DNA replication forks via replication fork reversal (RFR). RuvA specifically binds to HJ cruciform DNA, conferring on it an open structure. The RuvB hexamer acts as an ATP-dependent pump, pulling dsDNA into and through the RuvAB complex. RuvB forms 2 homohexamers on either side of HJ DNA bound by 1 or 2 RuvA tetramers; 4 subunits per hexamer contact DNA at a time. Coordinated motions by a converter formed by DNA-disengaged RuvB subunits stimulates ATP hydrolysis and nucleotide exchange. Immobilization of the converter enables RuvB to convert the ATP-contained energy into a lever motion, pulling 2 nucleotides of DNA out of the RuvA tetramer per ATP hydrolyzed, thus driving DNA branch migration. The RuvB motors rotate together with the DNA substrate, which together with the progressing nucleotide cycle form the mechanistic basis for DNA recombination by continuous HJ branch migration. Branch migration allows RuvC to scan DNA until it finds its consensus sequence, where it cleaves and resolves cruciform DNA. The polypeptide is Holliday junction branch migration complex subunit RuvB (Campylobacter curvus (strain 525.92)).